A 177-amino-acid chain; its full sequence is Respiratory growth induced protein 1 (177 aa).

A disordered region spans residues 1 to 37; that stretch reads MGRRKSQAAAERNLEPIKISTDSIKKRPRRDSNEPPF.

It belongs to the RGI1 family.

Its subcellular location is the cell membrane. Its function is as follows. Involved in the control of energetic metabolism and significantly contribute to cell fitness, especially under respiratory growth conditions. The sequence is that of Respiratory growth induced protein 1 (RGI1) from Komagataella phaffii (strain GS115 / ATCC 20864) (Yeast).